Here is a 428-residue protein sequence, read N- to C-terminus: Histidine--tRNA ligase (428 aa).

Belongs to the class-II aminoacyl-tRNA synthetase family. Homodimer.

It localises to the cytoplasm. The enzyme catalyses tRNA(His) + L-histidine + ATP = L-histidyl-tRNA(His) + AMP + diphosphate + H(+). The sequence is that of Histidine--tRNA ligase from Chromohalobacter salexigens (strain ATCC BAA-138 / DSM 3043 / CIP 106854 / NCIMB 13768 / 1H11).